Here is a 236-residue protein sequence, read N- to C-terminus: N-alpha-acetyltransferase 40 (236 aa).

Gly2 carries the N-myristoyl glycine lipid modification. The region spanning 63–217 (SDLDQKTIDW…DCTYEILSKR (155 aa)) is the N-acetyltransferase domain. Residues Tyr85, 127–129 (DVE), and Tyr138 contribute to the substrate site. Acetyl-CoA is bound by residues 140 to 142 (VQL) and 148 to 153 (RKGVGK). Residue Thr174 participates in substrate binding. Residue Asn179 participates in acetyl-CoA binding. Substrate is bound at residue Tyr211.

This sequence belongs to the acetyltransferase family. NAA40 subfamily.

The protein localises to the cytoplasm. It localises to the nucleus. It catalyses the reaction N-terminal L-seryl-[histone H4] + acetyl-CoA = N-terminal N(alpha)-acetyl-L-seryl-[histone H4] + CoA + H(+). It carries out the reaction N-terminal L-seryl-[histone H2A] + acetyl-CoA = N-terminal N(alpha)-acetyl-L-seryl-[histone H2A] + CoA + H(+). N-alpha-acetyltransferase that specifically mediates the acetylation of the N-terminal residues of histones H4 and H2A. In contrast to other N-alpha-acetyltransferase, has a very specific selectivity for histones H4 and H2A N-terminus and specifically recognizes the 'Ser-Gly-Arg-Gly sequence'. This is N-alpha-acetyltransferase 40 (naa40) from Xenopus laevis (African clawed frog).